The sequence spans 368 residues: CST complex subunit STN1 (368 aa).

The tract at residues 1–185 is interaction with CTC1; the sequence is MQPGSSRCEE…KVYDQPFHSS (185 aa). Positions 57–155 form a DNA-binding region, OB; sequence VDVLGTVIGV…EIHATTYYKV (99 aa). Winged helix-turn-helix (wHTH) regions lie at residues 191-295 and 296-368; these read EALS…YVTR and EDKD…YTAF.

The protein belongs to the STN1 family. As to quaternary structure, component of the CST complex, composed of TEN1/C17orf106, CTC1/C17orf68 and STN1; in the complex interacts directly with TEN1 and CTC1. Interacts with ACD/TPP1, POT1 and POLA1.

It is found in the nucleus. It localises to the chromosome. The protein localises to the telomere. Its function is as follows. Component of the CST complex proposed to act as a specialized replication factor promoting DNA replication under conditions of replication stress or natural replication barriers such as the telomere duplex. The CST complex binds single-stranded DNA with high affinity in a sequence-independent manner, while isolated subunits bind DNA with low affinity by themselves. Initially the CST complex has been proposed to protect telomeres from DNA degradation. However, the CST complex has been shown to be involved in several aspects of telomere replication. The CST complex inhibits telomerase and is involved in telomere length homeostasis; it is proposed to bind to newly telomerase-synthesized 3' overhangs and to terminate telomerase action implicating the association with the ACD:POT1 complex thus interfering with its telomerase stimulation activity. The CST complex is also proposed to be involved in fill-in synthesis of the telomeric C-strand probably implicating recruitment and activation of DNA polymerase alpha. The CST complex facilitates recovery from many forms of exogenous DNA damage; seems to be involved in the re-initiation of DNA replication at repaired forks and/or dormant origins. Required for efficicient replication of the duplex region of the telomere. Promotes efficient replication of lagging-strand telomeres. Promotes general replication start following replication-fork stalling implicating new origin firing. May be in involved in C-strand fill-in during late S/G2 phase independent of its role in telomere duplex replication. In terms of biological role, component of the CST complex, a complex that binds to single-stranded DNA and is required to protect telomeres from DNA degradation. The CST complex binds single-stranded DNA with high affinity in a sequence-independent manner, while isolated subunits bind DNA with low affinity by themselves. In addition to telomere protection, the CST complex has probably a more general role in DNA metabolism at non-telomeric sites. The chain is CST complex subunit STN1 from Homo sapiens (Human).